We begin with the raw amino-acid sequence, 229 residues long: General odorant-binding protein 69 (229 aa).

An N-terminal signal peptide occupies residues 1–20 (MDRLLLVLLSSASLLLTVYG). A disulfide bond links Cys66 and Cys106.

The protein belongs to the PBP/GOBP family.

The protein localises to the secreted. Present in the aqueous fluid surrounding olfactory sensory dendrites and are thought to aid in the capture and transport of hydrophobic odorants into and through this fluid. The protein is General odorant-binding protein 69 (Obp69) of Anopheles gambiae (African malaria mosquito).